We begin with the raw amino-acid sequence, 261 residues long: Cytochrome c oxidase subunit 3 (261 aa).

The Mitochondrial matrix portion of the chain corresponds to 1–15 (MTHQTHAYHMVNPSP). The chain crosses the membrane as a helical span at residues 16–34 (WPLTGALSALLMTSGLIMW). The Mitochondrial intermembrane portion of the chain corresponds to 35-40 (FHFNST). Residues 41-66 (TLLMLGLTTNMLTMYQWWRDIIREST) form a helical membrane-spanning segment. The Mitochondrial matrix portion of the chain corresponds to 67-72 (FQGHHT). A helical transmembrane segment spans residues 73 to 105 (PNVQKGLRYGMILFIISEVLFFTGFFWAFYHSS). The Mitochondrial intermembrane portion of the chain corresponds to 106-128 (LAPTPELGGCWPPTGIHPLNPLE). A helical transmembrane segment spans residues 129-152 (VPLLNTSVLLASGVSITWAHHSLM). At 153–155 (EGN) the chain is on the mitochondrial matrix side. Residues 156 to 183 (RNHMLQALFITIALGVYFTLLQASEYYE) form a helical membrane-spanning segment. Topologically, residues 184-190 (APFTISD) are mitochondrial intermembrane. A helical transmembrane segment spans residues 191–223 (GVYGSTFFVATGFHGLHVIIGSTFLIVCFFRQL). Residues 224–232 (KFHFTSSHH) are Mitochondrial matrix-facing. The helical transmembrane segment at 233 to 256 (FGFEAAAWYWHFVDVVWLFLYVSI) threads the bilayer. At 257–261 (YWWGS) the chain is on the mitochondrial intermembrane side.

The protein belongs to the cytochrome c oxidase subunit 3 family. Component of the cytochrome c oxidase (complex IV, CIV), a multisubunit enzyme composed of 14 subunits. The complex is composed of a catalytic core of 3 subunits MT-CO1, MT-CO2 and MT-CO3, encoded in the mitochondrial DNA, and 11 supernumerary subunits COX4I, COX5A, COX5B, COX6A, COX6B, COX6C, COX7A, COX7B, COX7C, COX8 and NDUFA4, which are encoded in the nuclear genome. The complex exists as a monomer or a dimer and forms supercomplexes (SCs) in the inner mitochondrial membrane with NADH-ubiquinone oxidoreductase (complex I, CI) and ubiquinol-cytochrome c oxidoreductase (cytochrome b-c1 complex, complex III, CIII), resulting in different assemblies (supercomplex SCI(1)III(2)IV(1) and megacomplex MCI(2)III(2)IV(2)).

It localises to the mitochondrion inner membrane. The enzyme catalyses 4 Fe(II)-[cytochrome c] + O2 + 8 H(+)(in) = 4 Fe(III)-[cytochrome c] + 2 H2O + 4 H(+)(out). Its function is as follows. Component of the cytochrome c oxidase, the last enzyme in the mitochondrial electron transport chain which drives oxidative phosphorylation. The respiratory chain contains 3 multisubunit complexes succinate dehydrogenase (complex II, CII), ubiquinol-cytochrome c oxidoreductase (cytochrome b-c1 complex, complex III, CIII) and cytochrome c oxidase (complex IV, CIV), that cooperate to transfer electrons derived from NADH and succinate to molecular oxygen, creating an electrochemical gradient over the inner membrane that drives transmembrane transport and the ATP synthase. Cytochrome c oxidase is the component of the respiratory chain that catalyzes the reduction of oxygen to water. Electrons originating from reduced cytochrome c in the intermembrane space (IMS) are transferred via the dinuclear copper A center (CU(A)) of subunit 2 and heme A of subunit 1 to the active site in subunit 1, a binuclear center (BNC) formed by heme A3 and copper B (CU(B)). The BNC reduces molecular oxygen to 2 water molecules using 4 electrons from cytochrome c in the IMS and 4 protons from the mitochondrial matrix. The protein is Cytochrome c oxidase subunit 3 (MT-CO3) of Litocranius walleri (Gerenuk).